A 578-amino-acid polypeptide reads, in one-letter code: Putative multidrug export ATP-binding/permease protein SA1683 (578 aa).

Residues 1–15 (MIKRYLQFVKPYKYR) are Cytoplasmic-facing. Residues 16-36 (IFATIIVGIIKFGIPMLIPLL) form a helical membrane-spanning segment. The ABC transmembrane type-1 domain occupies 16–306 (IFATIIVGII…LVASFTTLTQ (291 aa)). Topologically, residues 37 to 59 (IKYAIDGVINNHALTTDEKVHHL) are extracellular. The chain crosses the membrane as a helical span at residues 60–80 (TIAIGIALFIFVIVRPPIEFI). Residues 81 to 138 (RQYLAQWTSNKILYDIRKKLYNHLQALSARFYANNQVGQVISRVINDVEQTKDFILTG) lie on the Cytoplasmic side of the membrane. Residues 139–159 (LMNIWLDCITIIIALSIMFFL) traverse the membrane as a helical segment. Topologically, residues 160 to 162 (DVK) are extracellular. The chain crosses the membrane as a helical span at residues 163–183 (LTLAALFIFPFYILTVYVFFG). Residues 184–244 (RLRKLTRERS…TRALKHTRWN (61 aa)) lie on the Cytoplasmic side of the membrane. A helical transmembrane segment spans residues 245 to 263 (AYSFAAINTVTDIGPIIVI). The Extracellular portion of the chain corresponds to 264-269 (GVGAYL). The helical transmembrane segment at 270-287 (AISGSITVGTLAAFVGYL) threads the bilayer. At 288 to 578 (ELLFGPLRRL…YEHLYSIQNL (291 aa)) the chain is on the cytoplasmic side. The region spanning 340–575 (IDIDHVSFQY…QGAYEHLYSI (236 aa)) is the ABC transporter domain. Residue 374–381 (GMSGGGKS) coordinates ATP.

This sequence belongs to the ABC transporter superfamily. Homodimer.

The protein resides in the cell membrane. May be involved in multidrug export. Transmembrane domains (TMD) form a pore in the cell membrane and the ATP-binding domain (NBD) is responsible for energy generation. In Staphylococcus aureus (strain N315), this protein is Putative multidrug export ATP-binding/permease protein SA1683.